The following is a 427-amino-acid chain: WD repeat and SOCS box-containing protein 1 (427 aa).

WD repeat units lie at residues S129–N170, D173–K213, G217–K256, G259–E298, and A314–V353. The SOCS box domain maps to S379–V427.

In terms of assembly, component of a probable ECS E3 ubiquitin-protein ligase complex that contains the Elongin BC complex.

It functions in the pathway protein modification; protein ubiquitination. Probable substrate-recognition component of a SCF-like ECS (Elongin-Cullin-SOCS-box protein) E3 ubiquitin-protein ligase complex which mediates the ubiquitination and subsequent proteasomal degradation of target proteins. This is WD repeat and SOCS box-containing protein 1 (wsb1) from Takifugu rubripes (Japanese pufferfish).